The sequence spans 507 residues: DNA nucleotidylexotransferase (507 aa).

The Nuclear localization signal motif lies at Pro-11–Lys-17. The region spanning Gln-27 to Leu-124 is the BRCT domain. Residues Val-254–Thr-258 form an involved in DNA binding region. A 2'-deoxyribonucleoside 5'-triphosphate is bound by residues Gly-329 to Lys-334 and His-338 to Asp-341. The Mg(2+) site is built by Asp-339, Asp-341, and Asp-431. A 2'-deoxyribonucleoside 5'-triphosphate is bound at residue Gly-446–Trp-447.

Belongs to the DNA polymerase type-X family. Mg(2+) serves as cofactor. As to expression, found in the thymus and not in the spleen, kidney, intestine, or liver.

It is found in the nucleus. It carries out the reaction DNA(n) + a 2'-deoxyribonucleoside 5'-triphosphate = DNA(n+1) + diphosphate. Template-independent DNA polymerase which catalyzes the random addition of deoxynucleoside 5'-triphosphate to the 3'-end of a DNA initiator. One of the in vivo functions of this enzyme is the addition of nucleotides at the junction (N region) of rearranged Ig heavy chain and T-cell receptor gene segments during the maturation of B- and T-cells. The sequence is that of DNA nucleotidylexotransferase (dntt) from Xenopus laevis (African clawed frog).